We begin with the raw amino-acid sequence, 285 residues long: Methyltransferase grgD (285 aa).

Belongs to the methyltransferase superfamily. LaeA methyltransferase family.

Its pathway is secondary metabolite biosynthesis. In terms of biological role, methyltransferase; part of the gene cluster that mediates the biosynthesis of gregatin A, a fungal polyketide featuring an alkylated furanone core. The PKS grgA synthesizes C11 and C4 polyketide chains in the presence and absence of the trans-enoyl reductase grgB, respectively. The polyketide transferase grgF is then responsible for the fusion of the two carbon chains to produce the furanone skeleton of gregatin A. Next, the cytochrome P450 monooxygenase grgG accepts performs the oxidative cyclization to furnish the gregatin scaffold and leads to the formation of desmethylgregatin A. Finally, the O-methyltransferase grgD methylates the carboxyl group of desmethylgregatin A to provide gregatin A. The chain is Methyltransferase grgD from Penicillium sp.